A 103-amino-acid chain; its full sequence is MQPNDITFFQRFQDDILAGRKTITIRDESESHFKTGDVLRVGRFEDDGYFCTIEVTATSTVTLDTLTEKHAGQENMTLPELKKVIADIYPGQIQFYVIEFKCL.

The region spanning 6–101 (ITFFQRFQDD…QIQFYVIEFK (96 aa)) is the ASCH domain. K21 acts as the Proton acceptor in catalysis. The active-site Nucleophile is the T24. Residue E74 is the Proton donor of the active site.

Belongs to the N(4)-acetylcytidine amidohydrolase family.

It carries out the reaction N(4)-acetylcytidine + H2O = cytidine + acetate + H(+). It catalyses the reaction N(4)-acetyl-2'-deoxycytidine + H2O = 2'-deoxycytidine + acetate + H(+). The enzyme catalyses N(4)-acetylcytosine + H2O = cytosine + acetate + H(+). Its function is as follows. Catalyzes the hydrolysis of N(4)-acetylcytidine (ac4C). The polypeptide is N(4)-acetylcytidine amidohydrolase (yqfB) (Escherichia coli (strain SMS-3-5 / SECEC)).